Here is a 274-residue protein sequence, read N- to C-terminus: Diaminopimelate epimerase (274 aa).

2 residues coordinate substrate: Asn-11 and Asn-65. Catalysis depends on Cys-74, which acts as the Proton donor. Substrate contacts are provided by residues 75–76 (GN), Asn-158, Asn-191, and 209–210 (ER). Cys-218 serves as the catalytic Proton acceptor. 219-220 (GT) serves as a coordination point for substrate.

This sequence belongs to the diaminopimelate epimerase family. As to quaternary structure, homodimer.

Its subcellular location is the cytoplasm. It catalyses the reaction (2S,6S)-2,6-diaminopimelate = meso-2,6-diaminopimelate. Its pathway is amino-acid biosynthesis; L-lysine biosynthesis via DAP pathway; DL-2,6-diaminopimelate from LL-2,6-diaminopimelate: step 1/1. Functionally, catalyzes the stereoinversion of LL-2,6-diaminopimelate (L,L-DAP) to meso-diaminopimelate (meso-DAP), a precursor of L-lysine and an essential component of the bacterial peptidoglycan. The protein is Diaminopimelate epimerase of Carboxydothermus hydrogenoformans (strain ATCC BAA-161 / DSM 6008 / Z-2901).